The sequence spans 400 residues: AA13 family lytic polysaccharide monooxygenase A (400 aa).

A signal peptide spans 1-17 (MLLTVLAVVGCFTAVNG). Histidine 18 is a binding site for Cu(2+). Residue histidine 18 is modified to Methylhistidine. The Chitin-binding type-4 domain occupies 18 to 247 (HGYLTIPASR…AQVYLHCADI (230 aa)). Cystine bridges form between cysteine 39–cysteine 42, cysteine 65–cysteine 244, cysteine 101–cysteine 202, cysteine 117–cysteine 144, cysteine 152–cysteine 160, cysteine 166–cysteine 172, and cysteine 180–cysteine 191. Histidine 108 contributes to the Cu(2+) binding site. Asparagine 119 carries N-linked (GlcNAc...) asparagine glycosylation. Tyrosine 241 lines the Cu(2+) pocket. The tract at residues 254–287 (GGTTSKSTTSTTSTTSTSRSTSTSAPTTTSSAST) is disordered. Over residues 257–287 (TSKSTTSTTSTTSTSRSTSTSAPTTTSSAST) the composition is skewed to low complexity. Residues 293–400 (TTQASLIPVT…TTATAAASWR (108 aa)) enclose the CBM20 domain. A glycan (N-linked (GlcNAc...) asparagine) is linked at asparagine 379.

This sequence belongs to the polysaccharide monooxygenase AA13 family. Requires Cu(2+) as cofactor. In terms of processing, O-mannosylated.

It localises to the secreted. It catalyses the reaction starch + reduced acceptor + O2 = D-glucono-1,5-lactone-terminated malto-oligosaccharides + short-chain malto-oligosaccharides + acceptor + H2O.. With respect to regulation, activity is inhibited by both beta-cyclodextrin or amylose that block the access to the active site. Starch-active lytic polysaccharide monooxygenase that oxidizes the C1 position of starch substrates. Catalysis by LPMOs requires the reduction of the active-site copper from Cu(II) to Cu(I) by a reducing agent and H(2)O(2) or O(2) as a cosubstrate. This is AA13 family lytic polysaccharide monooxygenase A from Aspergillus terreus (strain NIH 2624 / FGSC A1156).